The primary structure comprises 187 residues: Ribosome maturation factor RimM (187 aa).

Over residues Met-1–Asp-17 the composition is skewed to polar residues. A disordered region spans residues Met-1–Val-21. Residues Glu-111–Leu-184 enclose the PRC barrel domain.

The protein belongs to the RimM family. In terms of assembly, binds ribosomal protein uS19.

It is found in the cytoplasm. In terms of biological role, an accessory protein needed during the final step in the assembly of 30S ribosomal subunit, possibly for assembly of the head region. Essential for efficient processing of 16S rRNA. May be needed both before and after RbfA during the maturation of 16S rRNA. It has affinity for free ribosomal 30S subunits but not for 70S ribosomes. This is Ribosome maturation factor RimM from Synechococcus sp. (strain CC9311).